Reading from the N-terminus, the 219-residue chain is uncharacterized protein (219 aa).

This is an uncharacterized protein from Escherichia coli (strain K12).